Reading from the N-terminus, the 332-residue chain is Aerobic cobaltochelatase subunit CobS (332 aa).

As to quaternary structure, heterotrimer of CobN, CobS and CobT.

It localises to the cytoplasm. It catalyses the reaction hydrogenobyrinate a,c-diamide + Co(2+) + ATP + H2O = cob(II)yrinate a,c diamide + ADP + phosphate + 5 H(+). The protein operates within cofactor biosynthesis; adenosylcobalamin biosynthesis; cob(II)yrinate a,c-diamide from precorrin-2 (aerobic route): step 10/10. Catalyzes cobalt insertion in the corrin ring. This chain is Aerobic cobaltochelatase subunit CobS (cobS), found in Sinorhizobium sp.